We begin with the raw amino-acid sequence, 376 residues long: Deoxyguanosinetriphosphate triphosphohydrolase-like protein (376 aa).

Residues 1–32 (MEPSFAPYAAHSSQTRGRVHREAPAAPRSEFQ) form a disordered region. The region spanning 65 to 196 (RLTHSIEVAQ…ANLADEIAYN (132 aa)) is the HD domain.

It belongs to the dGTPase family. Type 2 subfamily.

The chain is Deoxyguanosinetriphosphate triphosphohydrolase-like protein from Thiobacillus denitrificans (strain ATCC 25259 / T1).